The chain runs to 294 residues: Acetaldehyde dehydrogenase (294 aa).

NAD(+) is bound at residue 11–14 (SGNI). The active-site Acyl-thioester intermediate is Cys126. NAD(+)-binding positions include 157–165 (SAGPGTRAN) and Asn269.

The protein belongs to the acetaldehyde dehydrogenase family.

It carries out the reaction acetaldehyde + NAD(+) + CoA = acetyl-CoA + NADH + H(+). The sequence is that of Acetaldehyde dehydrogenase (pheF) from Geobacillus stearothermophilus (Bacillus stearothermophilus).